Here is a 147-residue protein sequence, read N- to C-terminus: Zinc finger HIT domain-containing protein 3 (147 aa).

Positions 3, 6, 14, 17, 22, 26, 30, and 34 each coordinate Zn(2+). Residues 3–34 (CVICLEKPKYRCPACRVPYCSVACFRKHKEQC) form an HIT-type zinc finger. The tract at residues 45 to 67 (IRSALPTKTXKPVENKDDDDSIA) is disordered. At S72 the chain carries Phosphoserine.

As to quaternary structure, thyroid receptor interacting proteins (TRIPs) specifically interact with the ligand binding domain of the thyroid receptor (TR). Requires the presence of thyroid hormone for its interaction. Interacts with NUFIP1. Interacts (via HIT-type zinc finger) with the RUVBL1/RUVBL2 complex in the presence of ADP.

It localises to the cytoplasm. The protein localises to the nucleus. This is Zinc finger HIT domain-containing protein 3 (ZNHIT3) from Macaca mulatta (Rhesus macaque).